The following is a 427-amino-acid chain: Glutamate-1-semialdehyde 2,1-aminomutase (427 aa).

Position 264 is an N6-(pyridoxal phosphate)lysine (lysine 264).

This sequence belongs to the class-III pyridoxal-phosphate-dependent aminotransferase family. HemL subfamily. In terms of assembly, homodimer. Requires pyridoxal 5'-phosphate as cofactor.

It localises to the cytoplasm. It carries out the reaction (S)-4-amino-5-oxopentanoate = 5-aminolevulinate. It participates in porphyrin-containing compound metabolism; protoporphyrin-IX biosynthesis; 5-aminolevulinate from L-glutamyl-tRNA(Glu): step 2/2. This is Glutamate-1-semialdehyde 2,1-aminomutase from Clostridium botulinum (strain Eklund 17B / Type B).